A 422-amino-acid chain; its full sequence is RNA exonuclease 4 (422 aa).

The disordered stretch occupies residues 1–194 (MGKAKVPASK…APAPPTEEDI (194 aa)). Position 15 is a phosphoserine (S15). Basic residues predominate over residues 26–40 (LTRKKNKKKKRFWKS). Residues S96 and S111 each carry the phosphoserine modification. 2 stretches are compositionally biased toward basic and acidic residues: residues 106 to 127 (NKKE…DQEA) and 151 to 176 (GTEH…DIEH). A Glycyl lysine isopeptide (Lys-Gly) (interchain with G-Cter in SUMO2) cross-link involves residue K115. The Exonuclease domain maps to 243–394 (ALALDCEMVG…QDAQAAMRLY (152 aa)).

Belongs to the REXO4 family. In terms of assembly, can bind ESR1 and ESR2. This interaction is abrogated by estrogen and augmented by tamoxifen treatment.

It localises to the nucleus. The protein resides in the nucleolus. The sequence is that of RNA exonuclease 4 (REXO4) from Homo sapiens (Human).